The sequence spans 443 residues: UDP-N-acetylmuramate--L-alanine ligase (443 aa).

Gly110–Ser116 serves as a coordination point for ATP.

Belongs to the MurCDEF family.

The protein resides in the cytoplasm. The enzyme catalyses UDP-N-acetyl-alpha-D-muramate + L-alanine + ATP = UDP-N-acetyl-alpha-D-muramoyl-L-alanine + ADP + phosphate + H(+). It functions in the pathway cell wall biogenesis; peptidoglycan biosynthesis. In terms of biological role, cell wall formation. In Streptococcus suis (strain 98HAH33), this protein is UDP-N-acetylmuramate--L-alanine ligase.